Reading from the N-terminus, the 247-residue chain is Uracil-DNA glycosylase (247 aa).

Asp-83 acts as the Proton acceptor in catalysis.

Belongs to the uracil-DNA glycosylase (UDG) superfamily. UNG family.

Its subcellular location is the cytoplasm. It carries out the reaction Hydrolyzes single-stranded DNA or mismatched double-stranded DNA and polynucleotides, releasing free uracil.. Its function is as follows. Excises uracil residues from the DNA which can arise as a result of misincorporation of dUMP residues by DNA polymerase or due to deamination of cytosine. This chain is Uracil-DNA glycosylase, found in Deinococcus radiodurans (strain ATCC 13939 / DSM 20539 / JCM 16871 / CCUG 27074 / LMG 4051 / NBRC 15346 / NCIMB 9279 / VKM B-1422 / R1).